Reading from the N-terminus, the 261-residue chain is Hydrolase in agr operon (261 aa).

Residues 1–239 form the CN hydrolase domain; that stretch reads MKVQIYQLPI…ADILTVDLNL (239 aa). Residue Glu-41 is the Proton acceptor of the active site. The active-site Proton donor is the Lys-110. Cys-146 (nucleophile) is an active-site residue.

It belongs to the carbon-nitrogen hydrolase superfamily. NIT1/NIT2 family.

The chain is Hydrolase in agr operon from Staphylococcus aureus.